The chain runs to 275 residues: Elongation factor Ts (275 aa).

Residues 76–79 form an involved in Mg(2+) ion dislocation from EF-Tu region; the sequence is TDFV.

It belongs to the EF-Ts family.

Its subcellular location is the cytoplasm. Its function is as follows. Associates with the EF-Tu.GDP complex and induces the exchange of GDP to GTP. It remains bound to the aminoacyl-tRNA.EF-Tu.GTP complex up to the GTP hydrolysis stage on the ribosome. The sequence is that of Elongation factor Ts from Mycolicibacterium paratuberculosis (strain ATCC BAA-968 / K-10) (Mycobacterium paratuberculosis).